Reading from the N-terminus, the 332-residue chain is Cell division protein ZipA (332 aa).

The Periplasmic portion of the chain corresponds to 1 to 6; that stretch reads MMQDLR. A helical membrane pass occupies residues 7 to 27; sequence LILIVVGAIAIIALLLHGLWT. Residues 28-332 are Cytoplasmic-facing; it reads SRKERSSLFR…RIRDVLKANA (305 aa). The span at 40–51 shows a compositional bias: basic and acidic residues; sequence PVKRAKKARDET. The segment at 40-189 is disordered; the sequence is PVKRAKKARD…VQPAPQQPAE (150 aa). Low complexity predominate over residues 76-88; the sequence is SFDSASVDSSSFD. Basic and acidic residues predominate over residues 93-105; the sequence is AREDVRSEAKSPF.

It belongs to the ZipA family. Interacts with FtsZ via their C-terminal domains.

The protein resides in the cell inner membrane. Its function is as follows. Essential cell division protein that stabilizes the FtsZ protofilaments by cross-linking them and that serves as a cytoplasmic membrane anchor for the Z ring. Also required for the recruitment to the septal ring of downstream cell division proteins. The protein is Cell division protein ZipA of Pectobacterium atrosepticum (strain SCRI 1043 / ATCC BAA-672) (Erwinia carotovora subsp. atroseptica).